A 102-amino-acid polypeptide reads, in one-letter code: MSITLGHYLSLGAMLFALSVIGIFLNRKNLIVLLMAIELMLLAVNLNFVAFSHYLGDMAGQVFVFFILTVAAAESAIGLAILVVLFRNRSTINVDELDALKG.

Helical transmembrane passes span 5-25, 31-51, and 62-82; these read LGHY…GIFL, IVLL…FVAF, and VFVF…LAIL.

Belongs to the complex I subunit 4L family. NDH-1 is composed of 14 different subunits. Subunits NuoA, H, J, K, L, M, N constitute the membrane sector of the complex.

It localises to the cell inner membrane. It catalyses the reaction a quinone + NADH + 5 H(+)(in) = a quinol + NAD(+) + 4 H(+)(out). In terms of biological role, NDH-1 shuttles electrons from NADH, via FMN and iron-sulfur (Fe-S) centers, to quinones in the respiratory chain. The immediate electron acceptor for the enzyme in this species is believed to be ubiquinone. Couples the redox reaction to proton translocation (for every two electrons transferred, four hydrogen ions are translocated across the cytoplasmic membrane), and thus conserves the redox energy in a proton gradient. The chain is NADH-quinone oxidoreductase subunit K from Methylibium petroleiphilum (strain ATCC BAA-1232 / LMG 22953 / PM1).